Reading from the N-terminus, the 488-residue chain is Proline--tRNA ligase (488 aa).

It belongs to the class-II aminoacyl-tRNA synthetase family. ProS type 3 subfamily. As to quaternary structure, homodimer.

Its subcellular location is the cytoplasm. It carries out the reaction tRNA(Pro) + L-proline + ATP = L-prolyl-tRNA(Pro) + AMP + diphosphate. Its function is as follows. Catalyzes the attachment of proline to tRNA(Pro) in a two-step reaction: proline is first activated by ATP to form Pro-AMP and then transferred to the acceptor end of tRNA(Pro). The polypeptide is Proline--tRNA ligase (Pyrobaculum aerophilum (strain ATCC 51768 / DSM 7523 / JCM 9630 / CIP 104966 / NBRC 100827 / IM2)).